Consider the following 370-residue polypeptide: MNIIVSGGGTGGHIYPAISLIEELKKRDKDNKILYVGTEKGLESSIVPKLGIDFKTIHVRGIPRKINANSFKALKELFQGLREANKILKEFKPDLVIGTGGYVSGPILYKATKTKAKVAFHEQNSFPGITNRILSRYVDKYFVTFKESIKYFKNQDKAVVTGNPIRNRFTDIEKNKKSALEQYDISENKKVVFIFGGSNGSEILNKATLNMIEKISNQDKFEIVLATGKLNYDEFIQQSGKEIKNLHVYPYIDDIDKAYAVSDLIVTSSGAITLAELSFLGKASILVPKAYTTENHQEHNARAFEKNGASKVILEKDLNSDTLFDQINEILSDDNLLNELSENSKKMSYPTACKDIVDELYRLVEQDEKA.

Residues 10–12 (TGG), Asn124, Arg166, Ser198, Ile252, and Gln297 each bind UDP-N-acetyl-alpha-D-glucosamine.

It belongs to the glycosyltransferase 28 family. MurG subfamily.

The protein localises to the cell membrane. It carries out the reaction di-trans,octa-cis-undecaprenyl diphospho-N-acetyl-alpha-D-muramoyl-L-alanyl-D-glutamyl-meso-2,6-diaminopimeloyl-D-alanyl-D-alanine + UDP-N-acetyl-alpha-D-glucosamine = di-trans,octa-cis-undecaprenyl diphospho-[N-acetyl-alpha-D-glucosaminyl-(1-&gt;4)]-N-acetyl-alpha-D-muramoyl-L-alanyl-D-glutamyl-meso-2,6-diaminopimeloyl-D-alanyl-D-alanine + UDP + H(+). Its pathway is cell wall biogenesis; peptidoglycan biosynthesis. Cell wall formation. Catalyzes the transfer of a GlcNAc subunit on undecaprenyl-pyrophosphoryl-MurNAc-pentapeptide (lipid intermediate I) to form undecaprenyl-pyrophosphoryl-MurNAc-(pentapeptide)GlcNAc (lipid intermediate II). This chain is UDP-N-acetylglucosamine--N-acetylmuramyl-(pentapeptide) pyrophosphoryl-undecaprenol N-acetylglucosamine transferase, found in Finegoldia magna (strain ATCC 29328 / DSM 20472 / WAL 2508) (Peptostreptococcus magnus).